The chain runs to 59 residues: Large ribosomal subunit protein uL30 (59 aa).

Belongs to the universal ribosomal protein uL30 family. In terms of assembly, part of the 50S ribosomal subunit.

This chain is Large ribosomal subunit protein uL30, found in Aliivibrio fischeri (strain MJ11) (Vibrio fischeri).